Reading from the N-terminus, the 240-residue chain is Probable septum site-determining protein MinC (240 aa).

Belongs to the MinC family. Interacts with MinD and FtsZ.

Its function is as follows. Cell division inhibitor that blocks the formation of polar Z ring septums. Rapidly oscillates between the poles of the cell to destabilize FtsZ filaments that have formed before they mature into polar Z rings. Prevents FtsZ polymerization. The polypeptide is Probable septum site-determining protein MinC (Chromobacterium violaceum (strain ATCC 12472 / DSM 30191 / JCM 1249 / CCUG 213 / NBRC 12614 / NCIMB 9131 / NCTC 9757 / MK)).